The primary structure comprises 261 residues: Homeobox protein ceh-33 (261 aa).

A DNA-binding region (homeobox) is located at residues 133 to 192 (GEETSYCFRDKSRVLLRDWYCRNSYPSPREKRELAEKTHLTVTQVSNWFKNRRQRDRAGV).

Belongs to the SIX/Sine oculis homeobox family.

It localises to the nucleus. The sequence is that of Homeobox protein ceh-33 (ceh-33) from Caenorhabditis elegans.